The primary structure comprises 114 residues: Large ribosomal subunit protein P2v (114 aa).

The disordered stretch occupies residues 74–114 (VASGGGGGAAPAAEPASVESKKKEEEKEESEDDGGMMSLFD). Ser103 carries the post-translational modification Phosphoserine.

The protein belongs to the eukaryotic ribosomal protein P1/P2 family. As to quaternary structure, P1 and P2 exist as dimers at the large ribosomal subunit. Post-translationally, phosphorylated.

Plays an important role in the elongation step of protein synthesis. The sequence is that of Large ribosomal subunit protein P2v (RPP2E) from Arabidopsis thaliana (Mouse-ear cress).